Consider the following 129-residue polypeptide: Phosphoribosyl-AMP cyclohydrolase (129 aa).

Asp76 is a binding site for Mg(2+). Residue Cys77 participates in Zn(2+) binding. Mg(2+)-binding residues include Asp78 and Asp80. Zn(2+)-binding residues include Cys97 and Cys104.

It belongs to the PRA-CH family. Homodimer. Requires Mg(2+) as cofactor. Zn(2+) is required as a cofactor.

It localises to the cytoplasm. The enzyme catalyses 1-(5-phospho-beta-D-ribosyl)-5'-AMP + H2O = 1-(5-phospho-beta-D-ribosyl)-5-[(5-phospho-beta-D-ribosylamino)methylideneamino]imidazole-4-carboxamide. The protein operates within amino-acid biosynthesis; L-histidine biosynthesis; L-histidine from 5-phospho-alpha-D-ribose 1-diphosphate: step 3/9. In terms of biological role, catalyzes the hydrolysis of the adenine ring of phosphoribosyl-AMP. The protein is Phosphoribosyl-AMP cyclohydrolase of Verminephrobacter eiseniae (strain EF01-2).